We begin with the raw amino-acid sequence, 801 residues long: Phenylalanine--tRNA ligase beta subunit (801 aa).

The region spanning 39-152 (ARAFSGVVVG…TDAPIGTDIR (114 aa)) is the tRNA-binding domain. The B5 domain occupies 407 to 482 (PARAPITLPI…RIYGYDNIPS (76 aa)). 4 residues coordinate Mg(2+): Asp-460, Asp-466, Glu-469, and Glu-470. Positions 706–799 (SKFPQVRRDI…LTVEHSAQLR (94 aa)) constitute an FDX-ACB domain.

This sequence belongs to the phenylalanyl-tRNA synthetase beta subunit family. Type 1 subfamily. As to quaternary structure, tetramer of two alpha and two beta subunits. Mg(2+) is required as a cofactor.

The protein resides in the cytoplasm. It catalyses the reaction tRNA(Phe) + L-phenylalanine + ATP = L-phenylalanyl-tRNA(Phe) + AMP + diphosphate + H(+). The chain is Phenylalanine--tRNA ligase beta subunit from Psychrobacter arcticus (strain DSM 17307 / VKM B-2377 / 273-4).